Reading from the N-terminus, the 139-residue chain is Nucleoside diphosphate kinase (139 aa).

Residues Lys11, Phe59, Arg87, Thr93, Arg104, and Asn114 each coordinate ATP. His117 acts as the Pros-phosphohistidine intermediate in catalysis.

This sequence belongs to the NDK family. As to quaternary structure, homotetramer. Requires Mg(2+) as cofactor.

Its subcellular location is the cytoplasm. The catalysed reaction is a 2'-deoxyribonucleoside 5'-diphosphate + ATP = a 2'-deoxyribonucleoside 5'-triphosphate + ADP. It catalyses the reaction a ribonucleoside 5'-diphosphate + ATP = a ribonucleoside 5'-triphosphate + ADP. Functionally, major role in the synthesis of nucleoside triphosphates other than ATP. The ATP gamma phosphate is transferred to the NDP beta phosphate via a ping-pong mechanism, using a phosphorylated active-site intermediate. The chain is Nucleoside diphosphate kinase from Wolbachia sp. subsp. Brugia malayi (strain TRS).